Consider the following 1037-residue polypeptide: Signal-induced proliferation-associated protein 1 (1037 aa).

Positions 1–85 (MWAGGVGSPR…ASRPAATPTR (85 aa)) are disordered. Threonine 62 carries the post-translational modification Phosphothreonine. Phosphoserine occurs at positions 65, 178, 299, and 309. A Rap-GAP domain is found at 316–534 (LLTLDEQVLS…RTRQQYLQDL (219 aa)). The PDZ domain maps to 682–758 (ELALPRDGQG…VCVTVLPPDE (77 aa)). Serine 812 and serine 834 each carry phosphoserine. Disordered regions lie at residues 830-849 (HNSL…LPNT) and 855-898 (LVTT…ASIL). Residues 871–881 (PPSQDQSGSPS) are compositionally biased toward low complexity. Position 907 is a phosphoserine (serine 907). Residues 943-969 (REGQPISESGDPKEALKCDSEPEPGSL) are disordered. The span at 952 to 962 (GDPKEALKCDS) shows a compositional bias: basic and acidic residues. Residues 968–1025 (SLSEKVSHLESMLWKLQEDLQREKADRAALEEEVRSLRHNNQRLLAESESAATRLLLA) are a coiled coil.

As to quaternary structure, interacts with RRP1B; the interaction leads to inhibition of SIPA1 GTPase activity. Preferentially expressed in both fetal and adult lymphohematopoietic tissues.

Its subcellular location is the nucleus. The protein resides in the cytoplasm. It is found in the perinuclear region. It localises to the endomembrane system. In terms of biological role, GTPase activator for the nuclear Ras-related regulatory proteins Rap1, Rsr1 and Ran in vitro, converting them to the putatively inactive GDP-bound state. Affects cell cycle progression. In Mus musculus (Mouse), this protein is Signal-induced proliferation-associated protein 1 (Sipa1).